We begin with the raw amino-acid sequence, 106 residues long: MNDSEFHQLADELMLQLEETLDQFEGDADIDSEINGGVMTLSFENGSKIVINRQEPLHQIWLATKTGGYHFTLREERWVCDRSGEDFIALLSSACSAQAGETVHFE.

It belongs to the frataxin family.

Its function is as follows. Involved in iron-sulfur (Fe-S) cluster assembly. May act as a regulator of Fe-S biogenesis. The protein is Iron-sulfur cluster assembly protein CyaY of Pectobacterium atrosepticum (strain SCRI 1043 / ATCC BAA-672) (Erwinia carotovora subsp. atroseptica).